The chain runs to 363 residues: UDP-N-acetylglucosamine--N-acetylmuramyl-(pentapeptide) pyrophosphoryl-undecaprenol N-acetylglucosamine transferase (363 aa).

UDP-N-acetyl-alpha-D-glucosamine-binding positions include 15 to 17 (TGG), Asn127, Arg169, Ser197, Ile251, 270 to 275 (ALTVSE), and Gln296.

The protein belongs to the glycosyltransferase 28 family. MurG subfamily.

The protein resides in the cell inner membrane. It catalyses the reaction di-trans,octa-cis-undecaprenyl diphospho-N-acetyl-alpha-D-muramoyl-L-alanyl-D-glutamyl-meso-2,6-diaminopimeloyl-D-alanyl-D-alanine + UDP-N-acetyl-alpha-D-glucosamine = di-trans,octa-cis-undecaprenyl diphospho-[N-acetyl-alpha-D-glucosaminyl-(1-&gt;4)]-N-acetyl-alpha-D-muramoyl-L-alanyl-D-glutamyl-meso-2,6-diaminopimeloyl-D-alanyl-D-alanine + UDP + H(+). The protein operates within cell wall biogenesis; peptidoglycan biosynthesis. Its function is as follows. Cell wall formation. Catalyzes the transfer of a GlcNAc subunit on undecaprenyl-pyrophosphoryl-MurNAc-pentapeptide (lipid intermediate I) to form undecaprenyl-pyrophosphoryl-MurNAc-(pentapeptide)GlcNAc (lipid intermediate II). The sequence is that of UDP-N-acetylglucosamine--N-acetylmuramyl-(pentapeptide) pyrophosphoryl-undecaprenol N-acetylglucosamine transferase from Dichelobacter nodosus (strain VCS1703A).